The sequence spans 303 residues: Coenzyme PQQ synthesis protein B (303 aa).

It belongs to the PqqB family.

It functions in the pathway cofactor biosynthesis; pyrroloquinoline quinone biosynthesis. May be involved in the transport of PQQ or its precursor to the periplasm. This is Coenzyme PQQ synthesis protein B from Pseudomonas fluorescens (strain SBW25).